Here is a 280-residue protein sequence, read N- to C-terminus: MRTYLDLLQHILDNGGDKGDRTGTGTRSVFGHQMRFDLSQGFPLLTTKKVHFRSIVIELLWFLKGDTNVQYLKDHKVSIWDEWATAEQTARFGRPEGELGPVYGHQWRNFGATQNSDGSYKNDGFDQIKWLINEIKTNPNSRRLIVSGWNPNEAGQVALPPCHTLFQFFVQDGKLSCQLYQRSADVFLGVPFNIASYALLTHMIAQVCGLGVGDFVWTGGDTHLYANHFEQAQLQLTREPLPLCQLKLNPEITDLFDFKFEDIEIVDYQSHPAIKAPVAV.

Residue arginine 21 coordinates dUMP. Histidine 51 provides a ligand contact to (6R)-5,10-methylene-5,6,7,8-tetrahydrofolate. Residue 142 to 143 (RR) participates in dUMP binding. Residue cysteine 162 is the Nucleophile of the active site. Residues 182-185 (RSAD), asparagine 193, and 223-225 (HLY) contribute to the dUMP site. Aspartate 185 provides a ligand contact to (6R)-5,10-methylene-5,6,7,8-tetrahydrofolate. Alanine 279 is a (6R)-5,10-methylene-5,6,7,8-tetrahydrofolate binding site.

This sequence belongs to the thymidylate synthase family. Bacterial-type ThyA subfamily. Homodimer.

It localises to the cytoplasm. The enzyme catalyses dUMP + (6R)-5,10-methylene-5,6,7,8-tetrahydrofolate = 7,8-dihydrofolate + dTMP. It functions in the pathway pyrimidine metabolism; dTTP biosynthesis. Its function is as follows. Catalyzes the reductive methylation of 2'-deoxyuridine-5'-monophosphate (dUMP) to 2'-deoxythymidine-5'-monophosphate (dTMP) while utilizing 5,10-methylenetetrahydrofolate (mTHF) as the methyl donor and reductant in the reaction, yielding dihydrofolate (DHF) as a by-product. This enzymatic reaction provides an intracellular de novo source of dTMP, an essential precursor for DNA biosynthesis. The sequence is that of Thymidylate synthase from Acinetobacter baylyi (strain ATCC 33305 / BD413 / ADP1).